A 428-amino-acid polypeptide reads, in one-letter code: Chaperone SurA (428 aa).

Residues Met-1 to Ser-19 form the signal peptide. PpiC domains follow at residues Ser-170 to Asp-268 and Val-277 to Asp-377.

The protein localises to the periplasm. It catalyses the reaction [protein]-peptidylproline (omega=180) = [protein]-peptidylproline (omega=0). Chaperone involved in the correct folding and assembly of outer membrane proteins. Recognizes specific patterns of aromatic residues and the orientation of their side chains, which are found more frequently in integral outer membrane proteins. May act in both early periplasmic and late outer membrane-associated steps of protein maturation. The protein is Chaperone SurA of Vibrio vulnificus (strain YJ016).